The sequence spans 1230 residues: ATP-dependent helicase/nuclease subunit A (1230 aa).

In terms of domain architecture, UvrD-like helicase ATP-binding spans 3–473; sequence TKFTKNQQRA…IDLADNFRSQ (471 aa). 24-31 is a binding site for ATP; the sequence is ASAGSGKT. The UvrD-like helicase C-terminal domain occupies 500-782; sequence EAKLVPKAAY…RIMTIHASKG (283 aa).

It belongs to the helicase family. AddA subfamily. As to quaternary structure, heterodimer of AddA and AddB/RexB. It depends on Mg(2+) as a cofactor.

It catalyses the reaction Couples ATP hydrolysis with the unwinding of duplex DNA by translocating in the 3'-5' direction.. The catalysed reaction is ATP + H2O = ADP + phosphate + H(+). Its function is as follows. The heterodimer acts as both an ATP-dependent DNA helicase and an ATP-dependent, dual-direction single-stranded exonuclease. Recognizes the chi site generating a DNA molecule suitable for the initiation of homologous recombination. The AddA nuclease domain is required for chi fragment generation; this subunit has the helicase and 3' -&gt; 5' nuclease activities. The polypeptide is ATP-dependent helicase/nuclease subunit A (Leuconostoc mesenteroides subsp. mesenteroides (strain ATCC 8293 / DSM 20343 / BCRC 11652 / CCM 1803 / JCM 6124 / NCDO 523 / NBRC 100496 / NCIMB 8023 / NCTC 12954 / NRRL B-1118 / 37Y)).